Here is a 483-residue protein sequence, read N- to C-terminus: UDP-N-acetylmuramoyl-L-alanyl-D-glutamate--2,6-diaminopimelate ligase (483 aa).

S30 serves as a coordination point for UDP-N-acetyl-alpha-D-muramoyl-L-alanyl-D-glutamate. Residue 109–115 (GTNGKTT) participates in ATP binding. UDP-N-acetyl-alpha-D-muramoyl-L-alanyl-D-glutamate is bound by residues 151-152 (TT), S178, and R186. K218 carries the N6-carboxylysine modification. Meso-2,6-diaminopimelate is bound by residues R380, 403–406 (DNPR), G453, and E457. The Meso-diaminopimelate recognition motif signature appears at 403–406 (DNPR).

Belongs to the MurCDEF family. MurE subfamily. It depends on Mg(2+) as a cofactor. Carboxylation is probably crucial for Mg(2+) binding and, consequently, for the gamma-phosphate positioning of ATP.

The protein resides in the cytoplasm. The enzyme catalyses UDP-N-acetyl-alpha-D-muramoyl-L-alanyl-D-glutamate + meso-2,6-diaminopimelate + ATP = UDP-N-acetyl-alpha-D-muramoyl-L-alanyl-gamma-D-glutamyl-meso-2,6-diaminopimelate + ADP + phosphate + H(+). Its pathway is cell wall biogenesis; peptidoglycan biosynthesis. Catalyzes the addition of meso-diaminopimelic acid to the nucleotide precursor UDP-N-acetylmuramoyl-L-alanyl-D-glutamate (UMAG) in the biosynthesis of bacterial cell-wall peptidoglycan. The chain is UDP-N-acetylmuramoyl-L-alanyl-D-glutamate--2,6-diaminopimelate ligase from Chlamydia trachomatis serovar A (strain ATCC VR-571B / DSM 19440 / HAR-13).